Reading from the N-terminus, the 89-residue chain is Small ribosomal subunit protein uS17 (89 aa).

This sequence belongs to the universal ribosomal protein uS17 family. As to quaternary structure, part of the 30S ribosomal subunit.

One of the primary rRNA binding proteins, it binds specifically to the 5'-end of 16S ribosomal RNA. This chain is Small ribosomal subunit protein uS17, found in Nocardia farcinica (strain IFM 10152).